The primary structure comprises 142 residues: Large ribosomal subunit protein uL11 (142 aa).

The protein belongs to the universal ribosomal protein uL11 family. As to quaternary structure, part of the ribosomal stalk of the 50S ribosomal subunit. Interacts with L10 and the large rRNA to form the base of the stalk. L10 forms an elongated spine to which L12 dimers bind in a sequential fashion forming a multimeric L10(L12)X complex. In terms of processing, one or more lysine residues are methylated.

Forms part of the ribosomal stalk which helps the ribosome interact with GTP-bound translation factors. This is Large ribosomal subunit protein uL11 from Proteus mirabilis (strain HI4320).